A 67-amino-acid chain; its full sequence is Large ribosomal subunit protein uL29 (67 aa).

This sequence belongs to the universal ribosomal protein uL29 family.

The chain is Large ribosomal subunit protein uL29 from Methanosarcina acetivorans (strain ATCC 35395 / DSM 2834 / JCM 12185 / C2A).